Reading from the N-terminus, the 261-residue chain is Putative hydro-lyase SSP0308 (261 aa).

The protein belongs to the D-glutamate cyclase family.

The chain is Putative hydro-lyase SSP0308 from Staphylococcus saprophyticus subsp. saprophyticus (strain ATCC 15305 / DSM 20229 / NCIMB 8711 / NCTC 7292 / S-41).